A 723-amino-acid chain; its full sequence is CSC1-like protein ERD4 (723 aa).

Residues 1–5 (MEFAS) lie on the Cytoplasmic side of the membrane. The helical transmembrane segment at 6 to 26 (FLVSLGTSAIIFVVLMFLFTW) threads the bilayer. The Extracellular portion of the chain corresponds to 27-90 (LSRRPGNVPV…TAVYFVFQST (64 aa)). A helical transmembrane segment spans residues 91–111 (VLGIFALSALLLLPTLLPIAA). Topologically, residues 112–148 (TDNNLETSRSATDTTSNGTFSQLDNLSMANITKSSSR) are cytoplasmic. The helical transmembrane segment at 149-169 (LWAFLGAVYWVSVVTYFMLWK) threads the bilayer. Topologically, residues 170 to 364 (AYKHVAALRA…IKFFSRIVRQ (195 aa)) are extracellular. Residues 365 to 385 (YVIYFLVAITILFYMIPIAFV) traverse the membrane as a helical segment. The Cytoplasmic segment spans residues 386–416 (SAITTLANLQKALPFLKPIVDIAFIRTILES). The helical transmembrane segment at 417–437 (YLPQIALIVFLAMLPKFLMFL) threads the bilayer. Residues 438–456 (SKSEGIPSQSHAIRATSGK) lie on the Extracellular side of the membrane. Residues 457–477 (YFYFSVLNVFIGVTLAGSLFE) form a helical membrane-spanning segment. Over 478-508 (NLKALEEKPNSFITLLATSLPKSATFFLTYV) the chain is Cytoplasmic. The chain crosses the membrane as a helical span at residues 509–529 (ALKFFVGYGLELSRIIPLIIF). At 530 to 572 (HLKKKYLCKTEAEVKEAWYPGDLSYATRVPSDMLILTITFCYS) the chain is on the extracellular side. A helical transmembrane segment spans residues 573-593 (VIAPLILVFGVIYFGLGWLIL). Over 594–614 (RNQALKVYVPSYESYGRMWPH) the chain is Cytoplasmic. The helical transmembrane segment at 615-635 (IHTRILAALFLFQLVMFGYLG) threads the bilayer. Topologically, residues 636 to 637 (VK) are extracellular. The chain crosses the membrane as a helical span at residues 638 to 658 (IFVWAILLVPLIFISLIFGYV). Over 659–723 (CRQKFYGGFE…YQDYAAISAA (65 aa)) the chain is Cytoplasmic.

It belongs to the CSC1 (TC 1.A.17) family.

The protein localises to the plastid. Its subcellular location is the chloroplast membrane. In terms of biological role, acts as an osmosensitive calcium-permeable cation channel. The chain is CSC1-like protein ERD4 (ERD4) from Brassica juncea (Indian mustard).